Here is a 417-residue protein sequence, read N- to C-terminus: UPF0761 membrane protein CV_0810 (417 aa).

7 helical membrane passes run 52-72, 79-99, 110-130, 150-170, 185-205, 214-234, and 258-278; these read LLAL…FPVF, FKIM…ITVY, LTAA…STIE, MVYW…LLSW, LLAS…VLAL, FVPF…LELT, and IPIF…GAVF.

Belongs to the UPF0761 family.

It is found in the cell inner membrane. This is UPF0761 membrane protein CV_0810 from Chromobacterium violaceum (strain ATCC 12472 / DSM 30191 / JCM 1249 / CCUG 213 / NBRC 12614 / NCIMB 9131 / NCTC 9757 / MK).